A 238-amino-acid polypeptide reads, in one-letter code: Orotidine 5'-phosphate decarboxylase (238 aa).

Residues aspartate 10, lysine 32, 59-68 (DLKLHDIPNT), threonine 122, arginine 184, glutamine 193, glycine 213, and arginine 214 each bind substrate. The Proton donor role is filled by lysine 61.

It belongs to the OMP decarboxylase family. Type 1 subfamily. As to quaternary structure, homodimer.

The catalysed reaction is orotidine 5'-phosphate + H(+) = UMP + CO2. It functions in the pathway pyrimidine metabolism; UMP biosynthesis via de novo pathway; UMP from orotate: step 2/2. Functionally, catalyzes the decarboxylation of orotidine 5'-monophosphate (OMP) to uridine 5'-monophosphate (UMP). The polypeptide is Orotidine 5'-phosphate decarboxylase (Bacillus thuringiensis subsp. konkukian (strain 97-27)).